Consider the following 263-residue polypeptide: Endonuclease 8 (263 aa).

The active-site Schiff-base intermediate with DNA is the P2. The Proton donor role is filled by E3. The Proton donor; for beta-elimination activity role is filled by K53. Q70, R125, and N169 together coordinate DNA. Residues 229 to 263 form an FPG-type zinc finger; it reads KVFHRDGEACERCGGIIEKTTLSSRPFYWCPHCQK. R253 functions as the Proton donor; for delta-elimination activity in the catalytic mechanism.

Belongs to the FPG family. Zn(2+) serves as cofactor.

It catalyses the reaction 2'-deoxyribonucleotide-(2'-deoxyribose 5'-phosphate)-2'-deoxyribonucleotide-DNA = a 3'-end 2'-deoxyribonucleotide-(2,3-dehydro-2,3-deoxyribose 5'-phosphate)-DNA + a 5'-end 5'-phospho-2'-deoxyribonucleoside-DNA + H(+). Functionally, involved in base excision repair of DNA damaged by oxidation or by mutagenic agents. Acts as a DNA glycosylase that recognizes and removes damaged bases. Has a preference for oxidized pyrimidines, such as thymine glycol, 5,6-dihydrouracil and 5,6-dihydrothymine. Has AP (apurinic/apyrimidinic) lyase activity and introduces nicks in the DNA strand. Cleaves the DNA backbone by beta-delta elimination to generate a single-strand break at the site of the removed base with both 3'- and 5'-phosphates. This is Endonuclease 8 from Salmonella schwarzengrund (strain CVM19633).